The chain runs to 529 residues: Peptide chain release factor 3 (529 aa).

The tr-type G domain maps to S11–M280. GTP-binding positions include S20 to T27, D88 to H92, and N142 to D145.

It belongs to the TRAFAC class translation factor GTPase superfamily. Classic translation factor GTPase family. PrfC subfamily.

It is found in the cytoplasm. Functionally, increases the formation of ribosomal termination complexes and stimulates activities of RF-1 and RF-2. It binds guanine nucleotides and has strong preference for UGA stop codons. It may interact directly with the ribosome. The stimulation of RF-1 and RF-2 is significantly reduced by GTP and GDP, but not by GMP. This chain is Peptide chain release factor 3, found in Pectobacterium carotovorum subsp. carotovorum (strain PC1).